The primary structure comprises 200 residues: Holliday junction branch migration complex subunit RuvA (200 aa).

Positions 1 to 64 (MYAYFRGRLV…EDALQLYGFA (64 aa)) are domain I. Residues 65 to 143 (TEEEKQLFRL…KLAPVGSAVA (79 aa)) form a domain II region. The interval 144–154 (SVAADRGGFRE) is flexible linker. A domain III region spans residues 154–200 (EDAVNALMTLGFPRPVANQAVGCALEPEPDASLEVVIKRALATMHNR).

Belongs to the RuvA family. In terms of assembly, homotetramer. Forms an RuvA(8)-RuvB(12)-Holliday junction (HJ) complex. HJ DNA is sandwiched between 2 RuvA tetramers; dsDNA enters through RuvA and exits via RuvB. An RuvB hexamer assembles on each DNA strand where it exits the tetramer. Each RuvB hexamer is contacted by two RuvA subunits (via domain III) on 2 adjacent RuvB subunits; this complex drives branch migration. In the full resolvosome a probable DNA-RuvA(4)-RuvB(12)-RuvC(2) complex forms which resolves the HJ.

It localises to the cytoplasm. Its function is as follows. The RuvA-RuvB-RuvC complex processes Holliday junction (HJ) DNA during genetic recombination and DNA repair, while the RuvA-RuvB complex plays an important role in the rescue of blocked DNA replication forks via replication fork reversal (RFR). RuvA specifically binds to HJ cruciform DNA, conferring on it an open structure. The RuvB hexamer acts as an ATP-dependent pump, pulling dsDNA into and through the RuvAB complex. HJ branch migration allows RuvC to scan DNA until it finds its consensus sequence, where it cleaves and resolves the cruciform DNA. The protein is Holliday junction branch migration complex subunit RuvA of Chlorobium phaeovibrioides (strain DSM 265 / 1930) (Prosthecochloris vibrioformis (strain DSM 265)).